Here is a 509-residue protein sequence, read N- to C-terminus: tRNA-2-methylthio-N(6)-dimethylallyladenosine synthase (509 aa).

Residues 1–20 (MNEKQKQESGQVNPADKTSE) form a disordered region. The MTTase N-terminal domain occupies 66–184 (RKFYIRTYGC…LPELLSEAYL (119 aa)). 6 residues coordinate [4Fe-4S] cluster: C75, C111, C145, C221, C225, and C228. A Radical SAM core domain is found at 207–437 (RNGKIKGWVN…NDLVKEISAK (231 aa)). Residues 440-503 (KEYEGRTVEV…TWSLDGVMAG (64 aa)) form the TRAM domain.

The protein belongs to the methylthiotransferase family. MiaB subfamily. As to quaternary structure, monomer. Requires [4Fe-4S] cluster as cofactor.

It localises to the cytoplasm. It carries out the reaction N(6)-dimethylallyladenosine(37) in tRNA + (sulfur carrier)-SH + AH2 + 2 S-adenosyl-L-methionine = 2-methylsulfanyl-N(6)-dimethylallyladenosine(37) in tRNA + (sulfur carrier)-H + 5'-deoxyadenosine + L-methionine + A + S-adenosyl-L-homocysteine + 2 H(+). Functionally, catalyzes the methylthiolation of N6-(dimethylallyl)adenosine (i(6)A), leading to the formation of 2-methylthio-N6-(dimethylallyl)adenosine (ms(2)i(6)A) at position 37 in tRNAs that read codons beginning with uridine. The sequence is that of tRNA-2-methylthio-N(6)-dimethylallyladenosine synthase from Bacillus velezensis (strain DSM 23117 / BGSC 10A6 / LMG 26770 / FZB42) (Bacillus amyloliquefaciens subsp. plantarum).